We begin with the raw amino-acid sequence, 186 residues long: Inner membrane-spanning protein YciB (186 aa).

Transmembrane regions (helical) follow at residues 10–30 (IILFFAAFKVWGIYVATAVAI), 47–67 (VEPLQWLSLGVIVLFGGATLL), 76–96 (WKPTVLYWLMGGTLLVGQLVF), 121–141 (WGWTGFFATMGVLNLWVAYNF), and 149–169 (FKLFGGIGLMFAFVIAQALYL).

This sequence belongs to the YciB family.

The protein localises to the cell inner membrane. Plays a role in cell envelope biogenesis, maintenance of cell envelope integrity and membrane homeostasis. The chain is Inner membrane-spanning protein YciB from Acidovorax sp. (strain JS42).